We begin with the raw amino-acid sequence, 185 residues long: Probable DNA-directed RNA polymerase subunit delta (185 aa).

Residues 14–81 (LSMIEVAHAI…GDNTWGLRAW (68 aa)) enclose the HTH HARE-type domain. Residues 90-185 (ATVGENEEDE…DEEDEDEDDE (96 aa)) form a disordered region. Acidic residues-rich tracts occupy residues 117–167 (DTDD…DDGI) and 175–185 (HDEEDEDEDDE).

The protein belongs to the RpoE family. As to quaternary structure, RNAP is composed of a core of 2 alpha, a beta and a beta' subunits. The core is associated with a delta subunit and one of several sigma factors.

Its function is as follows. Participates in both the initiation and recycling phases of transcription. In the presence of the delta subunit, RNAP displays an increased specificity of transcription, a decreased affinity for nucleic acids, and an increased efficiency of RNA synthesis because of enhanced recycling. The protein is Probable DNA-directed RNA polymerase subunit delta of Limosilactobacillus reuteri (strain DSM 20016) (Lactobacillus reuteri).